The following is a 300-amino-acid chain: 4-hydroxy-tetrahydrodipicolinate synthase (300 aa).

T55 contacts pyruvate. Residue Y143 is the Proton donor/acceptor of the active site. K171 serves as the catalytic Schiff-base intermediate with substrate. A pyruvate-binding site is contributed by I211.

This sequence belongs to the DapA family. Homotetramer; dimer of dimers.

It is found in the cytoplasm. The catalysed reaction is L-aspartate 4-semialdehyde + pyruvate = (2S,4S)-4-hydroxy-2,3,4,5-tetrahydrodipicolinate + H2O + H(+). Its pathway is amino-acid biosynthesis; L-lysine biosynthesis via DAP pathway; (S)-tetrahydrodipicolinate from L-aspartate: step 3/4. In terms of biological role, catalyzes the condensation of (S)-aspartate-beta-semialdehyde [(S)-ASA] and pyruvate to 4-hydroxy-tetrahydrodipicolinate (HTPA). The sequence is that of 4-hydroxy-tetrahydrodipicolinate synthase from Mycolicibacterium paratuberculosis (strain ATCC BAA-968 / K-10) (Mycobacterium paratuberculosis).